A 433-amino-acid chain; its full sequence is DNA polymerase processivity factor (433 aa).

The disordered stretch occupies residues 274 to 433 (RGDPFDKNYV…VPNTKKQKCG (160 aa)). Gly residues-rich tracts occupy residues 289-298 (SRGGGGGGGS), 325-336 (GLGGLGGGGGGG), and 344-359 (GGGG…GGGG). A compositionally biased stretch (basic and acidic residues) spans 360-376 (GDHDHGLSSKEKYEQHK). Over residues 385-398 (GGSGGGGGGGGGGL) the composition is skewed to gly residues. Lys410 participates in a covalent cross-link: Glycyl lysine isopeptide (Lys-Gly) (interchain with G-Cter in host SUMO1). Residues Ser413, Ser415, and Ser418 each carry the phosphoserine modification.

Belongs to the herpesviridae polymerase accessory protein family. Forms homodimers. Interacts with host SMARCB1. Interacts with host NCL/nucleolin; this interaction is important for the organization of proteins within viral replication compartments. Interacts with UL112/UL113; this interaction is necessary for efficient viral DNA replication. Interacts with UL84. Interacts with the uracil DNA glycosylase UL114. Interacts with the DNA polymerase catalytic subunit UL54. Interacts with host IRF3. Interacts with host RELA. Post-translationally, phosphorylated by UL97 on serine residues, phosphorylation seems important for UL44 nuclear entry but does not directly affect its role in replication. Sumoylated. Sumoylation on Lys-410 increases viral DNA replication.

It localises to the virion. Its subcellular location is the host nucleus. Accessory subunit of the DNA polymerase that plays an essential role in viral DNA replication and acts by increasing the processivity of polymerization. Forms dimers that binds to double-stranded DNA and UL54 specifically to stimulates long chain DNA synthesis efficiently. Plays an important role in maintaining the structure of viral replication compartments by interacting with host nucleolin/NUC. In addition, suppresses innate immune responses through effects on host IRF3 and NF-kappa-B. Mechanistically, interfere with the binding of IRF3 and the p65 NF-kappa-B subunit to the promoters of antiviral genes, thereby inhibiting the expression of these genes. The protein is DNA polymerase processivity factor (UL44) of Homo sapiens (Human).